We begin with the raw amino-acid sequence, 398 residues long: Acetyl-CoA acetyltransferase erg10B, cytosolic (398 aa).

Residue Cys92 is the Acyl-thioester intermediate of the active site. Tyr187 contacts K(+). CoA-binding residues include Asn229 and Lys232. The K(+) site is built by Ala249, Pro250, and Ser252. Ser253 contacts CoA. Val350 contacts K(+). Residues His354 and Cys384 each act as proton acceptor in the active site. Position 385 (Asn385) interacts with chloride.

Belongs to the thiolase-like superfamily. Thiolase family. In terms of assembly, homotetramer. Requires K(+) as cofactor.

It is found in the cytoplasm. Its subcellular location is the cytosol. The enzyme catalyses 2 acetyl-CoA = acetoacetyl-CoA + CoA. It functions in the pathway metabolic intermediate biosynthesis; (R)-mevalonate biosynthesis; (R)-mevalonate from acetyl-CoA: step 1/3. With respect to regulation, activity is increased by monovalent cations such as K(+), Rb(+) or Cs(+). Acetyl-CoA acetyltransferase; part of the first module of ergosterol biosynthesis pathway that includes the early steps of the pathway, conserved across all eukaryotes, and which results in the formation of mevalonate from acetyl-coenzyme A (acetyl-CoA). In this module, the cytosolic acetyl-CoA acetyltransferase erg10B catalyzes the formation of acetoacetyl-CoA. The hydroxymethylglutaryl-CoA synthases AFUA_8G07210 and AFUA_3G10660 then condense acetyl-CoA with acetoacetyl-CoA to form HMG-CoA. The rate-limiting step of the early module is the reduction to mevalonate by the 3-hydroxy-3-methylglutaryl-coenzyme A (HMG-CoA) reductases hmg1 and hmg2. Mevalonate is also a precursor for the extracellular siderophore triacetylfusarinine C (TAFC). The sequence is that of Acetyl-CoA acetyltransferase erg10B, cytosolic from Aspergillus fumigatus (strain CBS 144.89 / FGSC A1163 / CEA10) (Neosartorya fumigata).